Reading from the N-terminus, the 466-residue chain is MSSSITSGFIDLATVDEIEKYMYGLPDDGVSMAHTLTYFVREFKKSTWFTQVPVPLSRSTGTSDFGQNWSVSISRAGDYLLQTWLRVTIPQVTLAATATPATLSLRWTRNLMHNLIREITISFNDLVGSRLDNYFLDMWSAFTTPASKRNGYDNMIGNISTLTDPVGPGGSLGHTGGTVLNLPISLFFTRDTGVSLPTAALPYNEIQLNFSMRDWKDLLILTDTAITTGNPYQTIDVSKHLGGVAPSLSNVQVWANYAIVSNVERKKMGCGVRDILIEQVQTAPRQNYTPSTNPMPSFDIRFSHAVKVLFFAVRNKTSAAEWSNYGTSSPVVSGTSVNYEPSGSFDPIATTTLIYENSNRLGTMGSDYYSLVSPWYHAPTIPSFIGYHMYSYSLNFFDLDPMGSTNYGKLTNVSIVPHASDAAVKASTGAGDGAGANYNQSYEFIVMAVNNNIVRISGGCLGFPVL.

It belongs to the NCLDV major capsid protein family. In terms of assembly, homotrimer.

The protein localises to the virion. Functionally, major capsid protein that self assembles to form an icosahedral capsid. Represents around 50% of the total virion protein mass. The protein is Major capsid protein (MCP) of Invertebrate iridescent virus 3 (IIV-3).